Consider the following 233-residue polypeptide: Zinc metalloproteinase recombinant fibrinogenase II (233 aa).

The region spanning 19–215 (KYVETVFVVD…HNPECIDNEP (197 aa)) is the Peptidase M12B domain. Residues Glu22 and Asp106 each contribute to the Ca(2+) site. 3 cysteine pairs are disulfide-bonded: Cys130–Cys210, Cys170–Cys194, and Cys172–Cys177. Residue His155 participates in Zn(2+) binding. Glu156 is a catalytic residue. The Zn(2+) site is built by His159 and His165. Asn193 carries N-linked (GlcNAc...) asparagine glycosylation. Ca(2+) is bound by residues Cys210, Asn213, Asn228, Leu230, and Glu232.

The protein belongs to the venom metalloproteinase (M12B) family. P-III subfamily. Zn(2+) serves as cofactor. Expressed by the venom gland.

The protein resides in the secreted. Inhibited by PMSF and EDTA. Slightly inhibited by Cu(2+) and Zn(2+). Not inhibited by aprotinin, SBTI, Ca(2+), Mg(2+), Na(+) and K(+). In terms of biological role, snake venom zinc metalloprotease that acts at several levels. It has direct fibrino(geno)lytic activity (Aalpha chain of fibrinogen is cleaved quickly, Bbeta chain slowly, and gamma chain even more slowly) and degradation of TNF-alpha. These activities permit to protect against sepsis and disseminated intravascular coagulation. It inhibits ADP-induced platelet aggregation in human platelet-rich plasma (IC(50)=65.4 ug/ml). It decreases the activity of complement by degrading human C5, C6 and C9 in vitro, decreasing serum levels of C1q, C3 and C4 in rat, and inhibiting the MAC deposition on HUVECs membrane. This inhibition of complement protects against hyperacute rejection that is the main barrier in xenotransplantation. Has preference for Lys at the P1 position. Cleaves insulin B chain at '36-Val-|-Glu-37', '39-Leu-|-Tyr-40', and '48-Phe-|-Phe-49' bonds. Also cleaves fibronectin and type IV collagen. The chain is Zinc metalloproteinase recombinant fibrinogenase II from Deinagkistrodon acutus (Hundred-pace snake).